A 154-amino-acid polypeptide reads, in one-letter code: MATFSQKPTEVVKKWVIIDAENLVLGRLAAFVANRLRGKHKATFTPHVDDGDNVIVINADKIVLTGKKYTDKKYYWHTGYIGGIKERTARQILEGRFPERVVEKAVERMIPRGPLGRRQLRNLHVYAGSQNPHAAQQPEALDVGALNRKNKRIA.

This sequence belongs to the universal ribosomal protein uL13 family. As to quaternary structure, part of the 50S ribosomal subunit.

Its function is as follows. This protein is one of the early assembly proteins of the 50S ribosomal subunit, although it is not seen to bind rRNA by itself. It is important during the early stages of 50S assembly. This chain is Large ribosomal subunit protein uL13, found in Bartonella quintana (strain Toulouse) (Rochalimaea quintana).